Reading from the N-terminus, the 245-residue chain is MIIPALDLIDGTVVRLHQGDYGKQRDYGNDPLPRLQDYAAQGAEVLHLVDLTGAKDPAKRQIPLIKTLVAGVNVPVQVGGGVRSEEDVAALLEAGVARVVVGSTAVKSPEMVKGWFERFGADALVLALDVRIDEQGNKQVAVSGWQENSGVSLEQLVETYLPVGLKHVLCTDISRDGTLAGSNVSLYEEVCARYPQVAFQSSGGIGDINDVAALRGTGVRSVIVGRALLEGKFTVKEAIACWQNA.

The active-site Proton acceptor is the Asp7. Asp129 functions as the Proton donor in the catalytic mechanism.

The protein belongs to the HisA/HisF family.

The protein localises to the cytoplasm. The enzyme catalyses 1-(5-phospho-beta-D-ribosyl)-5-[(5-phospho-beta-D-ribosylamino)methylideneamino]imidazole-4-carboxamide = 5-[(5-phospho-1-deoxy-D-ribulos-1-ylimino)methylamino]-1-(5-phospho-beta-D-ribosyl)imidazole-4-carboxamide. It participates in amino-acid biosynthesis; L-histidine biosynthesis; L-histidine from 5-phospho-alpha-D-ribose 1-diphosphate: step 4/9. The chain is 1-(5-phosphoribosyl)-5-[(5-phosphoribosylamino)methylideneamino] imidazole-4-carboxamide isomerase from Escherichia coli O45:K1 (strain S88 / ExPEC).